The chain runs to 195 residues: Exosome complex component CSL4 (195 aa).

Residue Ser21 is modified to Phosphoserine. Residues 66 to 147 (DVGAVVTCKV…AQSNYLLTTA (82 aa)) form the S1 motif domain.

The protein belongs to the CSL4 family. As to quaternary structure, component of the RNA exosome core complex (Exo-9), composed of EXOSC1, EXOSC2, EXOSC3, EXOSC4, EXOSC5, EXOSC6, EXOSC7, EXOSC8 and EXOSC9; within the complex interacts with EXOSC6. The catalytically inactive RNA exosome core complex (Exo-9) associates with the catalytic subunit EXOSC10/RRP6. Exo-9 may associate with DIS3 to form the nucleolar exosome complex, or DIS3L to form the cytoplasmic exosome complex. Exo-9 is formed by a hexameric base ring consisting of the heterodimers EXOSC4-EXOSC9, EXOSC5-EXOSC8 and EXOSC6-EXOSC7, and a cap ring consisting of EXOSC1, EXOSC2 and EXOSC3. The RNA exosome complex associates with cofactors C1D/RRP47, MPHOSPH6/MPP6 and MTREX/MTR4. Interacts with DDX60.

The protein localises to the nucleus. The protein resides in the nucleolus. It localises to the cytoplasm. Non-catalytic component of the RNA exosome complex which has 3'-&gt;5' exoribonuclease activity and participates in a multitude of cellular RNA processing and degradation events. In the nucleus, the RNA exosome complex is involved in proper maturation of stable RNA species such as rRNA, snRNA and snoRNA, in the elimination of RNA processing by-products and non-coding 'pervasive' transcripts, such as antisense RNA species and promoter-upstream transcripts (PROMPTs), and of mRNAs with processing defects, thereby limiting or excluding their export to the cytoplasm. The RNA exosome may be involved in Ig class switch recombination (CSR) and/or Ig variable region somatic hypermutation (SHM) by targeting AICDA deamination activity to transcribed dsDNA substrates. In the cytoplasm, the RNA exosome complex is involved in general mRNA turnover and specifically degrades inherently unstable mRNAs containing AU-rich elements (AREs) within their 3' untranslated regions, and in RNA surveillance pathways, preventing translation of aberrant mRNAs. It seems to be involved in degradation of histone mRNA. The catalytic inactive RNA exosome core complex of 9 subunits (Exo-9) is proposed to play a pivotal role in the binding and presentation of RNA for ribonucleolysis, and to serve as a scaffold for the association with catalytic subunits and accessory proteins or complexes. EXOSC1 as peripheral part of the Exo-9 complex stabilizes the hexameric ring of RNase PH-domain subunits through contacts with EXOSC6 and EXOSC8. This is Exosome complex component CSL4 (Exosc1) from Mus musculus (Mouse).